The sequence spans 453 residues: Citrate (Re)-synthase (453 aa).

Positions 46–316 constitute a Pyruvate carboxyltransferase domain; sequence IYITDTTFRD…TKNMKLHVIT (271 aa).

This sequence belongs to the alpha-IPM synthase/homocitrate synthase family. The cofactor is Mn(2+). It depends on Co(2+) as a cofactor. Mg(2+) is required as a cofactor.

The catalysed reaction is oxaloacetate + acetyl-CoA + H2O = citrate + CoA + H(+). Inhibited by p-chloromercuribenzoate (pCMB), EDTA, Zn(2+) ions, and under aerobic conditions. Catalyzes the condensation of the acetyl group of acetyl-CoA with oxaloacetate to form citrate. This enzyme is highly Re-face stereospecific with respect to the C-2 of oxaloacetate. This Clostridium kluyveri (strain ATCC 8527 / DSM 555 / NBRC 12016 / NCIMB 10680 / K1) protein is Citrate (Re)-synthase.